A 398-amino-acid polypeptide reads, in one-letter code: Elongation factor Tu (398 aa).

A tr-type G domain is found at 10–207 (KPHVNIGTIG…TVDEYIPEPE (198 aa)). The tract at residues 19 to 26 (GHVDHGKT) is G1. 19–26 (GHVDHGKT) contacts GTP. A Mg(2+)-binding site is contributed by T26. The G2 stretch occupies residues 63–67 (GITIN). The interval 84-87 (DAPG) is G3. Residues 84–88 (DAPGH) and 139–142 (NKVD) each bind GTP. Residues 139–142 (NKVD) form a G4 region. The segment at 177–179 (SAL) is G5.

It belongs to the TRAFAC class translation factor GTPase superfamily. Classic translation factor GTPase family. EF-Tu/EF-1A subfamily. In terms of assembly, monomer.

The protein localises to the cytoplasm. It catalyses the reaction GTP + H2O = GDP + phosphate + H(+). Its function is as follows. GTP hydrolase that promotes the GTP-dependent binding of aminoacyl-tRNA to the A-site of ribosomes during protein biosynthesis. The sequence is that of Elongation factor Tu from Streptococcus agalactiae serotype V (strain ATCC BAA-611 / 2603 V/R).